The chain runs to 134 residues: Small ribosomal subunit protein bS6 (134 aa).

The disordered stretch occupies residues 100 to 134 (SFLARDETDRRERSEETAEGEGEPDHSANEAVVTA). Over residues 103–115 (ARDETDRRERSEE) the composition is skewed to basic and acidic residues.

The protein belongs to the bacterial ribosomal protein bS6 family.

In terms of biological role, binds together with bS18 to 16S ribosomal RNA. The chain is Small ribosomal subunit protein bS6 from Acidithiobacillus ferrooxidans (strain ATCC 23270 / DSM 14882 / CIP 104768 / NCIMB 8455) (Ferrobacillus ferrooxidans (strain ATCC 23270)).